The following is a 497-amino-acid chain: Aldehyde dehydrogenase (497 aa).

Residue 242 to 247 coordinates NAD(+); that stretch reads GSTLVG. Glu-265 acts as the Proton acceptor in catalysis. Cys-299 serves as the catalytic Nucleophile.

This sequence belongs to the aldehyde dehydrogenase family.

The catalysed reaction is an aldehyde + NAD(+) + H2O = a carboxylate + NADH + 2 H(+). It functions in the pathway alcohol metabolism; ethanol degradation; acetate from ethanol: step 2/2. This chain is Aldehyde dehydrogenase (aldA), found in Aspergillus niger.